The sequence spans 137 residues: NADH-quinone oxidoreductase subunit A (137 aa).

A run of 3 helical transmembrane segments spans residues 12–32 (WGFA…LGLS), 66–86 (FYLV…LFAW), and 95–115 (WTGF…LVYL).

The protein belongs to the complex I subunit 3 family. In terms of assembly, NDH-1 is composed of 13 different subunits. Subunits NuoA, H, J, K, L, M, N constitute the membrane sector of the complex.

The protein resides in the cell inner membrane. The catalysed reaction is a quinone + NADH + 5 H(+)(in) = a quinol + NAD(+) + 4 H(+)(out). Functionally, NDH-1 shuttles electrons from NADH, via FMN and iron-sulfur (Fe-S) centers, to quinones in the respiratory chain. The immediate electron acceptor for the enzyme in this species is believed to be ubiquinone. Couples the redox reaction to proton translocation (for every two electrons transferred, four hydrogen ions are translocated across the cytoplasmic membrane), and thus conserves the redox energy in a proton gradient. The protein is NADH-quinone oxidoreductase subunit A of Pseudomonas savastanoi pv. phaseolicola (strain 1448A / Race 6) (Pseudomonas syringae pv. phaseolicola (strain 1448A / Race 6)).